A 284-amino-acid chain; its full sequence is Shikimate dehydrogenase (NADP(+)) (284 aa).

Shikimate contacts are provided by residues 20–22 and Ser67; that span reads SIS. The Proton acceptor role is filled by Lys71. Asp83 provides a ligand contact to NADP(+). 2 residues coordinate shikimate: Asn92 and Asp107. Residues 129–133 and Ile227 each bind NADP(+); that span reads GAGGA. Tyr229 contacts shikimate. NADP(+) is bound at residue Gly250.

It belongs to the shikimate dehydrogenase family. As to quaternary structure, homodimer.

It carries out the reaction shikimate + NADP(+) = 3-dehydroshikimate + NADPH + H(+). It functions in the pathway metabolic intermediate biosynthesis; chorismate biosynthesis; chorismate from D-erythrose 4-phosphate and phosphoenolpyruvate: step 4/7. In terms of biological role, involved in the biosynthesis of the chorismate, which leads to the biosynthesis of aromatic amino acids. Catalyzes the reversible NADPH linked reduction of 3-dehydroshikimate (DHSA) to yield shikimate (SA). This Streptococcus pneumoniae (strain CGSP14) protein is Shikimate dehydrogenase (NADP(+)).